We begin with the raw amino-acid sequence, 342 residues long: N-acetyl-gamma-glutamyl-phosphate reductase (342 aa).

Cys-147 is an active-site residue.

It belongs to the NAGSA dehydrogenase family. Type 1 subfamily.

It localises to the cytoplasm. The catalysed reaction is N-acetyl-L-glutamate 5-semialdehyde + phosphate + NADP(+) = N-acetyl-L-glutamyl 5-phosphate + NADPH + H(+). The protein operates within amino-acid biosynthesis; L-arginine biosynthesis; N(2)-acetyl-L-ornithine from L-glutamate: step 3/4. Catalyzes the NADPH-dependent reduction of N-acetyl-5-glutamyl phosphate to yield N-acetyl-L-glutamate 5-semialdehyde. In Campylobacter jejuni (strain RM1221), this protein is N-acetyl-gamma-glutamyl-phosphate reductase.